The chain runs to 235 residues: Ribosome maturation factor RimM (235 aa).

Positions 1-19 (MKHEEANKEIGGRGAEGQR) are enriched in basic and acidic residues. The tract at residues 1-49 (MKHEEANKEIGGRGAEGQRSKRVGGNSKIQNIQSPAPNPQPIVPNTQSP) is disordered. In terms of domain architecture, PRC barrel spans 150 to 230 (EDEYHVLDLI…RIEITPPPGL (81 aa)).

This sequence belongs to the RimM family. Binds ribosomal protein uS19.

The protein localises to the cytoplasm. An accessory protein needed during the final step in the assembly of 30S ribosomal subunit, possibly for assembly of the head region. Essential for efficient processing of 16S rRNA. May be needed both before and after RbfA during the maturation of 16S rRNA. It has affinity for free ribosomal 30S subunits but not for 70S ribosomes. This is Ribosome maturation factor RimM from Nostoc punctiforme (strain ATCC 29133 / PCC 73102).